Consider the following 493-residue polypeptide: MESVRVRFAPSPTGFVHIGSLRTALYNYLFARKNQGKYILRVEDTDQSRFVEGAIEGMLKSMDWAGVSHNEGVVLEEETLKQQGQYGPYIQSERLPIYQEHITKLLEEGHAYHCFCSKERLDEVREKQKAAGETAKYDGHCRENPKEMVREKIEAGESYVIRLKLPENRDIEFNDIVRGKVTMNTGDLDDQVLIKSDGFPTYHFAVVVDDHLMEITHVIRGEEWLPSTPKHVYLYEVMGWQAPQYVHLPNILNTERKKLSKRQGDVAVGDFMRKGYLPEALVNYIALVGWSPEDNQEIFSMTELEENFSLERVSKSGGVFDVNKLNWINNHYIKESTADRIVDLAIPYLIEAGYVTEAEVGKKYDWLKDLVGVLKERLDYVADIVNHVDIFFKTAIEPKSDEAREILKEAHLPELLEAFLEKVEAAEVIDDAFGKKALKEIQKEKGFKGPKLFKPIRVALTGEEHGPDLPLIIKVLGKENLKSRIQYVKEHLI.

Residues 10–20 (PSPTGFVHIGS) carry the 'HIGH' region motif. Positions 114, 116, 141, and 143 each coordinate Zn(2+). A 'KMSKS' region motif is present at residues 258-262 (KLSKR). Lys261 lines the ATP pocket.

This sequence belongs to the class-I aminoacyl-tRNA synthetase family. Glutamate--tRNA ligase type 1 subfamily. Monomer. The cofactor is Zn(2+).

The protein resides in the cytoplasm. The enzyme catalyses tRNA(Glu) + L-glutamate + ATP = L-glutamyl-tRNA(Glu) + AMP + diphosphate. Functionally, catalyzes the attachment of glutamate to tRNA(Glu) in a two-step reaction: glutamate is first activated by ATP to form Glu-AMP and then transferred to the acceptor end of tRNA(Glu). The protein is Glutamate--tRNA ligase of Alkaliphilus metalliredigens (strain QYMF).